Here is a 495-residue protein sequence, read N- to C-terminus: Potassium voltage-gated channel subfamily A member 1 (495 aa).

The interval 1 to 30 is disordered; sequence MTVMSGENADEASTAPGHPQDGSYPRQADH. Positions 1–128 are tetramerization domain; that stretch reads MTVMSGENAD…FYELGEEAME (128 aa). Residues 1-164 are Cytoplasmic-facing; that stretch reads MTVMSGENAD…LLFEYPESSG (164 aa). At Ser23 the chain carries Phosphoserine. A helical transmembrane segment spans residues 165 to 186; sequence PARVIAIVSVMVILISIVIFCL. The Extracellular portion of the chain corresponds to 187–220; it reads ETLPELKDDKDFTGTIHRIDNTTVIYTSNIFTDP. N-linked (GlcNAc...) asparagine glycosylation is present at Asn207. Residues 221 to 242 traverse the membrane as a helical segment; it reads FFIVETLCIIWFSFELVVRFFA. The S-palmitoyl cysteine moiety is linked to residue Cys243. The Cytoplasmic portion of the chain corresponds to 243–253; it reads CPSKTDFFKNI. A helical transmembrane segment spans residues 254–274; that stretch reads MNFIDIVAIIPYFITLGTEIA. Topologically, residues 275–287 are extracellular; the sequence is EQEGNQKGEQATS. Residues 288-308 form a helical; Voltage-sensor membrane-spanning segment; that stretch reads LAILRVIRLVRVFRIFKLSRH. Residues 309-323 lie on the Cytoplasmic side of the membrane; sequence SKGLQILGQTLKASM. Residues 310 to 323 are S4-S5 linker; the sequence is KGLQILGQTLKASM. Position 322 is a phosphoserine; by PKA (Ser322). The chain crosses the membrane as a helical span at residues 324-345; the sequence is RELGLLIFFLFIGVILFSSAVY. At 346 to 359 the chain is on the extracellular side; the sequence is FAEAEEAESHFSSI. The segment at residues 360–371 is an intramembrane region (helical); the sequence is PDAFWWAVVSMT. The Selectivity filter signature appears at 372 to 377; it reads TVGYGD. An intramembrane segment occupies 372 to 379; that stretch reads TVGYGDMY. The Extracellular segment spans residues 380–386; that stretch reads PVTIGGK. The helical transmembrane segment at 387–415 threads the bilayer; sequence IVGSLCAIAGVLTIALPVPVIVSNFNYFY. Residues 416 to 495 lie on the Cytoplasmic side of the membrane; it reads HRETEGEEQA…VNKSKLLTDV (80 aa). Phosphoserine is present on residues Ser437 and Ser439. Residue Ser446 is modified to Phosphoserine; by PKA. The PDZ-binding signature appears at 493–495; that stretch reads TDV.

It belongs to the potassium channel family. A (Shaker) (TC 1.A.1.2) subfamily. Kv1.1/KCNA1 sub-subfamily. As to quaternary structure, homotetramer and heterotetramer with other channel-forming alpha subunits, such as KCNA2, KCNA4, KCNA5, KCNA6 and KCNA7. Channel activity is regulated by interaction with the beta subunits KCNAB1 and KCNAB2. Identified in a complex with KCNA2 and KCNAB2. Interacts (via C-terminus) with the PDZ domains of DLG1, DLG2 and DLG4. Interacts with LGI1 within a complex containing LGI1, KCNA4 and KCNAB1. Interacts (via N-terminus) with STX1A; this promotes channel inactivation. Interacts (via N-terminus) with the heterodimer formed by GNB1 and GNG2; this promotes channel inactivation. Can interact simultaneously with STX1A and the heterodimer formed by GNB1 and GNG2. Interacts (via cytoplasmic N-terminal domain) with KCNRG; this inhibits channel activity. Interacts with ANK3; this inhibits channel activity. Interacts with ADAM11. Post-translationally, N-glycosylated. Palmitoylated on Cys-243; which may be required for membrane targeting. In terms of processing, phosphorylated on tyrosine residues. Phosphorylation increases in response to NRG1; this inhibits channel activity. Phosphorylation at Ser-446 regulates channel activity by down-regulating expression at the cell membrane. As to expression, detected in brain. Expressed in cerebellar cortex basket cell terminals, the area surround the Purkinje cell soma, and the pinceaux expansions encircling the axon initial segment (at protein level). Detected in the juxtaparanodal regions of the nodes of Ranvier in myelinated axons. Detected in the paranodal region in sciatic nerve. Detected on cell bodies in cerebellum, dorsal and ventral cochlear nucleus, pontine reticular nucleus, mesencephalic trigeminal nucleus, motor trigeminal nucleus and the pricipal sensory trigeminal nucleus. Detected in terminal fields of basket cells in the cerebellum corpus medullare. Detected in hippocampus CA3 pyramidal neurons and in the hilus and stratum moleculare of the dentate gyrus. Detected in the central nucleus and the external nucleus of the inferior colliculus. Detected in fiber tracts in the optic tract, external medullary lamina, stria terminalis, medulla, ventral pallidum and substantia nigra. Detected in neurons from dorsal root ganglion. Detected in neurons in the medial nucleus of the trapezoid body. Detected in midbrain dopamine neuron axon terminals. Detected in brain cortex. Detected in brainstem. Detected in juxtaparanodal regions of the nodes of Ranvier in the vagus nerve, but only at very low levels in the heart. Detected in the islet of Langerhans. Detected at the luminal membrane in distal convoluted tubules in the kidney (at protein level). Detected in hippocampus, thalamus, neocortex and ventral brain cortex, including the piriform and entorhinal cortex and the amygdala. Detected in midbrain dopamine neurons. Detected in heart atrium, ventricle, sinoatrial node and atrioventricular node.

It localises to the cell membrane. Its subcellular location is the cell projection. It is found in the axon. The protein resides in the membrane. The protein localises to the perikaryon. It localises to the dendrite. Its subcellular location is the cell junction. It is found in the synapse. The protein resides in the cytoplasmic vesicle. The protein localises to the endoplasmic reticulum. It localises to the presynaptic cell membrane. Its subcellular location is the presynapse. The catalysed reaction is K(+)(in) = K(+)(out). Inhibited by 4-aminopyridine (4-AP), tetraethylammonium (TEA) and dendrotoxin (DTX), but not by charybdotoxin (CTX). Functionally, voltage-gated potassium channel that mediates transmembrane potassium transport in excitable membranes, primarily in the brain and the central nervous system, but also in the kidney. Contributes to the regulation of the membrane potential and nerve signaling, and prevents neuronal hyperexcitability. Forms tetrameric potassium-selective channels through which potassium ions pass in accordance with their electrochemical gradient. The channel alternates between opened and closed conformations in response to the voltage difference across the membrane. Can form functional homotetrameric channels and heterotetrameric channels that contain variable proportions of KCNA1, KCNA2, KCNA4, KCNA5, KCNA6, KCNA7, and possibly other family members as well; channel properties depend on the type of alpha subunits that are part of the channel. Channel properties are modulated by cytoplasmic beta subunits that regulate the subcellular location of the alpha subunits and promote rapid inactivation of delayed rectifier potassium channels. In vivo, membranes probably contain a mixture of heteromeric potassium channel complexes, making it difficult to assign currents observed in intact tissues to any particular potassium channel family member. Homotetrameric KCNA1 forms a delayed-rectifier potassium channel that opens in response to membrane depolarization, followed by slow spontaneous channel closure. In contrast, a heterotetrameric channel formed by KCNA1 and KCNA4 shows rapid inactivation. Regulates neuronal excitability in hippocampus, especially in mossy fibers and medial perforant path axons, preventing neuronal hyperexcitability. May function as down-stream effector for G protein-coupled receptors and inhibit GABAergic inputs to basolateral amygdala neurons. May contribute to the regulation of neurotransmitter release, such as gamma-aminobutyric acid (GABA) release. Plays a role in regulating the generation of action potentials and preventing hyperexcitability in myelinated axons of the vagus nerve, and thereby contributes to the regulation of heart contraction. Required for normal neuromuscular responses. Regulates the frequency of neuronal action potential firing in response to mechanical stimuli, and plays a role in the perception of pain caused by mechanical stimuli, but does not play a role in the perception of pain due to heat stimuli. Required for normal responses to auditory stimuli and precise location of sound sources, but not for sound perception. The use of toxins that block specific channels suggest that it contributes to the regulation of the axonal release of the neurotransmitter dopamine. Required for normal postnatal brain development and normal proliferation of neuronal precursor cells in the brain. Plays a role in the reabsorption of Mg(2+) in the distal convoluted tubules in the kidney and in magnesium ion homeostasis, probably via its effect on the membrane potential. The sequence is that of Potassium voltage-gated channel subfamily A member 1 from Mus musculus (Mouse).